A 134-amino-acid chain; its full sequence is Complexin-2 (134 aa).

Residues Met1–Glu114 are disordered. A compositionally biased stretch (basic and acidic residues) spans Asp15–Ala85. The stretch at Asp29–Ala84 forms a coiled coil.

Belongs to the complexin/synaphin family. As to quaternary structure, binds to the SNARE core complex containing SNAP25, VAMP2 and STX1A. Nervous system. Present in electric organ (at protein level).

It localises to the cytoplasm. The protein resides in the cytosol. Its subcellular location is the presynapse. The protein localises to the nucleus. It is found in the perikaryon. Functionally, positively regulates a late step in synaptic vesicle exocytosis. This Narke japonica (Japanese sleeper ray) protein is Complexin-2.